A 180-amino-acid polypeptide reads, in one-letter code: Regulator of G-protein signaling 8 (180 aa).

S26 bears the Phosphoserine mark. The RGS domain maps to 56–171; the sequence is SFDVLLSHKY…FLRSKMYLDL (116 aa).

In terms of assembly, interacts with GNAO1 and GNAI3. Expressed at high levels in brain. Very little expression detected in other tissues. Detected in Purkinje cells in the cerebellum.

The protein localises to the cell membrane. It localises to the membrane. Its subcellular location is the perikaryon. The protein resides in the cell projection. It is found in the dendrite. The protein localises to the nucleus. Functionally, regulates G protein-coupled receptor signaling cascades, including signaling via muscarinic acetylcholine receptor CHRM2 and dopamine receptor DRD2. Inhibits signal transduction by increasing the GTPase activity of G protein alpha subunits, thereby driving them into their inactive GDP-bound form. Modulates the activity of potassium channels that are activated in response to DRD2 and CHRM2 signaling. The chain is Regulator of G-protein signaling 8 (Rgs8) from Rattus norvegicus (Rat).